The chain runs to 683 residues: MSEVPAAIQEELNTLRETINDHNYRYYTLDDPSIPDAEYDRLMRRLREIEAEFPQTITPDSPTQRVGAAPAEGFETVSHRLPMLSLDNAFEEQDLLDFDRRVRERLKEAEDARIDYCCEPKLDGIAISLLYRDGYLVRGVTRGDGSAGEDITANVKTVKNIPLKLRGEGYPAELEVRGEIYLPKAAFDAINKDAAAKGEKTFVNPRNAAAGSLRQLDPRITAKRALEMCCYSVGYFEGELPGTQHDILTQLQQWGLKINSQMKLASGAQECLDYYRHIMSVRDQLPYEIDGVVFKVNRIDLQQELGFVSRAPRWAIAHKFPAHEEMTELLAVDFQVGRTGAVTPVARLKPVFVGGVTVSNATLHNMDEIRRLDVHIGDTVIIRRAGDVIPQVVSVVQDRRPENAVPVDRPEHCPVCGSDVLQLEGEAVARCSGGLYCSAQRKEAIKHFASRKAMDIDGLGDRLVELLVEKELIDSPASLYSLKAPDVAGLERMGEKSAQNLINAIEASKQTTFARFIYALGIREVGEATAKVLAQHFPTLDLLKQATEEDLVEAPDIGPISAGHIRSFFQQEHNLETIDALLNQGVSWPEVVVRSTETLPLSGQTAVVTGVLADYSRDEAKDLLTRLGAKVSGSVSAKTGFVVAGEKAGSKLTKAQDLGVKVLDEDAFKQLLEEHQAHLGGEA.

Residues 36 to 40 (DAEYD), 85 to 86 (SL), and Glu119 each bind NAD(+). Lys121 functions as the N6-AMP-lysine intermediate in the catalytic mechanism. Positions 142, 179, 295, and 319 each coordinate NAD(+). Zn(2+) is bound by residues Cys413, Cys416, Cys431, and Cys437. The 88-residue stretch at 596 to 683 (TETLPLSGQT…EHQAHLGGEA (88 aa)) folds into the BRCT domain.

The protein belongs to the NAD-dependent DNA ligase family. LigA subfamily. Requires Mg(2+) as cofactor. Mn(2+) serves as cofactor.

It catalyses the reaction NAD(+) + (deoxyribonucleotide)n-3'-hydroxyl + 5'-phospho-(deoxyribonucleotide)m = (deoxyribonucleotide)n+m + AMP + beta-nicotinamide D-nucleotide.. Its function is as follows. DNA ligase that catalyzes the formation of phosphodiester linkages between 5'-phosphoryl and 3'-hydroxyl groups in double-stranded DNA using NAD as a coenzyme and as the energy source for the reaction. It is essential for DNA replication and repair of damaged DNA. The sequence is that of DNA ligase from Hahella chejuensis (strain KCTC 2396).